Here is a 155-residue protein sequence, read N- to C-terminus: Putative pre-16S rRNA nuclease (155 aa).

Positions 136 to 155 (DAERATSRPPGHPVEPRIGP) are disordered.

It belongs to the YqgF nuclease family.

It localises to the cytoplasm. In terms of biological role, could be a nuclease involved in processing of the 5'-end of pre-16S rRNA. This Leifsonia xyli subsp. xyli (strain CTCB07) protein is Putative pre-16S rRNA nuclease.